A 714-amino-acid polypeptide reads, in one-letter code: MNTLQGPVSFKDVAVDFTQEEWQQLDPDEKITYRDVMLENYSHLVSVGYDTTKPNVIIKLEQGEEPWIMGGEFPCQHSPEAWRVDDLIERIQENEDKHSRQAACINSKTLTEEKENTFSQIYMETSLVPSSIIAHNCVSCGKNLESISQLISSDGSYARTKPDECNECGKTYHGEKMCEFNQNGDTYSHNEENILQKISILEKPFEYNECMEALDNEAVFIAHKRAYIGEKPYEWNDSGPDFIQMSNFNAYQRSQMEMKPFECSECGKSFCKKSKFIIHQRAHTGEKPYECNVCGKSFSQKGTLTVHRRSHLEEKPYKCNECGKTFCQKLHLTQHLRTHSGEKPYECSECGKTFCQKTHLTLHQRNHSGERPYPCNECGKSFSRKSALSDHQRTHTGEKLYKCNECGKSYYRKSTLITHQRTHTGEKPYQCSECGKFFSRVSYLTIHYRSHLEEKPYECNECGKTFNLNSAFIRHRKVHTEEKSHECSECGKFSQLYLTDHHTAHLEEKPYECNECGKTFLVNSAFDGHQPLPKGEKSYECNVCGKLFNELSYYTEHYRSHSEEKPYGCSECGKTFSHNSSLFRHQRVHTGEKPYECYECGKFFSQKSYLTIHHRIHSGEKPYECSKCGKVFSRMSNLTVHYRSHSGEKPYECNECGKVFSQKSYLTVHYRTHSGEKPYECNECGKKFHHRSAFNSHQRIHRRGNMNVLDVENL.

A KRAB domain is found at 8–79 (VSFKDVAVDF…GGEFPCQHSP (72 aa)). Residues Lys97 and Lys259 each participate in a glycyl lysine isopeptide (Lys-Gly) (interchain with G-Cter in SUMO2) cross-link. Positions 171-260 (TYHGEKMCEF…YQRSQMEMKP (90 aa)) are required for interaction with RB1. 2 consecutive C2H2-type zinc fingers follow at residues 261 to 283 (FECS…QRAH) and 289 to 311 (YECN…RRSH). Lys315 is covalently cross-linked (Glycyl lysine isopeptide (Lys-Gly) (interchain with G-Cter in SUMO2)). C2H2-type zinc fingers lie at residues 317-339 (YKCN…LRTH), 345-367 (YECS…QRNH), 373-395 (YPCN…QRTH), 401-423 (YKCN…QRTH), 429-451 (YQCS…YRSH), 457-479 (YECN…RKVH), and 485-505 (HECS…HTAH). Lys357 participates in a covalent cross-link: Glycyl lysine isopeptide (Lys-Gly) (interchain with G-Cter in SUMO2). Positions 417–714 (ITHQRTHTGE…NMNVLDVENL (298 aa)) are interaction with AR. The C2H2-type 10; degenerate zinc-finger motif lies at 511–533 (YECNECGKTFLVNSAFDGHQPLP). Glycyl lysine isopeptide (Lys-Gly) (interchain with G-Cter in SUMO2) cross-links involve residues Lys534 and Lys537. 6 C2H2-type zinc fingers span residues 539 to 561 (YECN…YRSH), 567 to 589 (YGCS…QRVH), 595 to 617 (YECY…HRIH), 623 to 645 (YECS…YRSH), 651 to 673 (YECN…YRTH), and 679 to 701 (YECN…QRIH).

The protein belongs to the krueppel C2H2-type zinc-finger protein family. Interacts with AR and RB1. May also interact with other nuclear hormone receptors such as NR3C1/GR. As to expression, expressed in bone, brain, heart, kidney, liver, lung, pancreas and placenta.

The protein resides in the nucleus. In terms of biological role, may repress E2F-dependent transcription. May promote AR-dependent transcription. The polypeptide is RB-associated KRAB zinc finger protein (RBAK) (Homo sapiens (Human)).